Here is a 208-residue protein sequence, read N- to C-terminus: Uracil phosphoribosyltransferase (208 aa).

5-phospho-alpha-D-ribose 1-diphosphate-binding positions include R78, R103, and 130-138 (DPMLATGGS). Residues I193 and 198-200 (GDA) each bind uracil. D199 is a binding site for 5-phospho-alpha-D-ribose 1-diphosphate.

It belongs to the UPRTase family. It depends on Mg(2+) as a cofactor.

It catalyses the reaction UMP + diphosphate = 5-phospho-alpha-D-ribose 1-diphosphate + uracil. It functions in the pathway pyrimidine metabolism; UMP biosynthesis via salvage pathway; UMP from uracil: step 1/1. Its activity is regulated as follows. Allosterically activated by GTP. Functionally, catalyzes the conversion of uracil and 5-phospho-alpha-D-ribose 1-diphosphate (PRPP) to UMP and diphosphate. This Shewanella putrefaciens (strain CN-32 / ATCC BAA-453) protein is Uracil phosphoribosyltransferase.